Here is a 282-residue protein sequence, read N- to C-terminus: Cell division protein FtsQ (282 aa).

Residues 1-30 (MINIGPPKKRRLRRKGNRFKKTRRVIPWRR) are Cytoplasmic-facing. A helical transmembrane segment spans residues 31–51 (LMIGALWGTMALASLGMVVAV). The Periplasmic portion of the chain corresponds to 52–282 (ACFAGQMLFA…LDAGELRGKG (231 aa)). A POTRA domain is found at 65-133 (FKVERIQVEN…DQLVIRVDER (69 aa)).

Belongs to the FtsQ/DivIB family. FtsQ subfamily.

It localises to the cell inner membrane. Essential cell division protein. This chain is Cell division protein FtsQ, found in Syntrophotalea carbinolica (strain DSM 2380 / NBRC 103641 / GraBd1) (Pelobacter carbinolicus).